The sequence spans 318 residues: Putative S-adenosyl-L-methionine-dependent methyltransferase BCG_0781c (318 aa).

S-adenosyl-L-methionine-binding positions include D135 and 164–165 (DL).

The protein belongs to the UPF0677 family.

Its function is as follows. Exhibits S-adenosyl-L-methionine-dependent methyltransferase activity. The chain is Putative S-adenosyl-L-methionine-dependent methyltransferase BCG_0781c from Mycobacterium bovis (strain BCG / Pasteur 1173P2).